Consider the following 792-residue polypeptide: Alpha-1,6-mannosylglycoprotein 6-beta-N-acetylglucosaminyltransferase B (792 aa).

Over 1-24 (MITVNPDGKIMVRRCLVTLRPFRL) the chain is Cytoplasmic. The helical; Signal-anchor for type II membrane protein transmembrane segment at 25 to 45 (FVLGIGFFTLCFLMTSLGGQF) threads the bilayer. Residues 46-792 (SARRLGDSPF…GQVALCQGCL (747 aa)) are Lumenal-facing. Asparagine 127 carries an N-linked (GlcNAc...) asparagine glycan. 4 disulfides stabilise this stretch: cysteine 157-cysteine 195, cysteine 168-cysteine 208, cysteine 184-cysteine 353, and cysteine 387-cysteine 644. An N-linked (GlcNAc...) asparagine glycan is attached at asparagine 675. Intrachain disulfides connect cysteine 700–cysteine 775, cysteine 704–cysteine 777, cysteine 711–cysteine 764, cysteine 732–cysteine 753, and cysteine 788–cysteine 791.

Belongs to the glycosyltransferase 18 family. The cofactor is Mn(2+). In terms of tissue distribution, present in brain (at protein level). Predominantly expressed in hippocampus, superficial layers of the brain cortex, striatum, nucleus accumbens, a subset of nuclei in the thalamus, inferior colliculus, brain stem and cerebellum.

Its subcellular location is the golgi apparatus membrane. The catalysed reaction is N(4)-{beta-D-GlcNAc-(1-&gt;2)-[beta-D-GlcNAc-(1-&gt;4)]-alpha-D-Man-(1-&gt;3)-[beta-D-GlcNAc-(1-&gt;2)-alpha-D-Man-(1-&gt;6)]-beta-D-Man-(1-&gt;4)-beta-D-GlcNAc-(1-&gt;4)-beta-D-GlcNAc}-L-asparaginyl-[protein] + UDP-N-acetyl-alpha-D-glucosamine = N(4)-{beta-D-GlcNAc-(1-&gt;2)-[beta-D-GlcNAc-(1-&gt;4)]-alpha-D-Man-(1-&gt;3)-[beta-D-GlcNAc-(1-&gt;2)-[beta-D-GlcNAc-(1-&gt;6)]-alpha-D-Man-(1-&gt;6)]-beta-D-Man-(1-&gt;4)-beta-D-GlcNAc-(1-&gt;4)-beta-D-GlcNAc}-L-asparaginyl-[protein] + UDP + H(+). It catalyses the reaction 3-O-[N-acetyl-beta-D-glucosaminyl-(1-&gt;2)-alpha-D-mannosyl]-L-seryl-[protein] + UDP-N-acetyl-alpha-D-glucosamine = O(3)-{N-acetyl-beta-D-glucosaminyl-(1-&gt;2)-[N-acetyl-beta-D-glucosaminyl-(1-&gt;6)]-alpha-D-mannosyl}-L-seryl-[protein] + UDP + H(+). It carries out the reaction 3-O-[N-acetyl-beta-D-glucosaminyl-(1-&gt;2)-alpha-D-mannosyl]-L-threonyl-[protein] + UDP-N-acetyl-alpha-D-glucosamine = O(3)-{N-acetyl-beta-D-glucosaminyl-(1-&gt;2)-[N-acetyl-beta-D-glucosaminyl-(1-&gt;6)]-alpha-D-mannosyl}-L-threonyl-[protein] + UDP + H(+). It participates in protein modification; protein glycosylation. Glycosyltransferase that acts on alpha-linked mannose of N-glycans and O-mannosyl glycans. Catalyzes the transfer of N-acetylglucosamine (GlcNAc) to the beta 1-6 linkage of the mannose residue of GlcNAc-beta1,2-Man-alpha on both the alpha1,3- and alpha1,6-linked mannose arms in the core structure of N-glycan. Also acts on the GlcNAc-beta1,2-Man-alpha1-Ser/Thr moiety, forming a 2,6-branched structure in brain O-mannosyl glycan. Plays an active role in modulating integrin and laminin-dependent adhesion and migration of neuronal cells via its activity in the O-mannosyl glycan pathway. The sequence is that of Alpha-1,6-mannosylglycoprotein 6-beta-N-acetylglucosaminyltransferase B (Mgat5b) from Mus musculus (Mouse).